Here is a 729-residue protein sequence, read N- to C-terminus: Sorting nexin mvp1 (729 aa).

Disordered stretches follow at residues 1 to 43 (MSLF…SANL) and 177 to 340 (PLPK…EEPN). The region spanning 356–464 (EETVTVNLLP…VMFLTVPTEL (109 aa)) is the PX domain. Residues arginine 392, serine 394, lysine 418, and arginine 431 each contribute to the a 1,2-diacyl-sn-glycero-3-phospho-(1D-myo-inositol-3-phosphate) site.

It belongs to the sorting nexin family.

The protein resides in the cytoplasm. Its subcellular location is the membrane. In terms of biological role, required for vacuolar protein sorting. The chain is Sorting nexin mvp1 (mvp1) from Aspergillus fumigatus (strain ATCC MYA-4609 / CBS 101355 / FGSC A1100 / Af293) (Neosartorya fumigata).